The chain runs to 202 residues: LexA repressor (202 aa).

Residues 28-48 (RAEIAMRLGFRSPNAAEEHLK) constitute a DNA-binding region (H-T-H motif). Residues S119 and K156 each act as for autocatalytic cleavage activity in the active site.

The protein belongs to the peptidase S24 family. Homodimer.

It catalyses the reaction Hydrolysis of Ala-|-Gly bond in repressor LexA.. Its function is as follows. Represses a number of genes involved in the response to DNA damage (SOS response), including recA and lexA. Binds to the 16 bp palindromic sequence 5'-CTGTATATATATACAG-3'. In the presence of single-stranded DNA, RecA interacts with LexA causing an autocatalytic cleavage which disrupts the DNA-binding part of LexA, leading to derepression of the SOS regulon and eventually DNA repair. In Serratia proteamaculans (strain 568), this protein is LexA repressor.